A 464-amino-acid chain; its full sequence is Cysteine--tRNA ligase (464 aa).

Position 32 (C32) interacts with Zn(2+). The short motif at 34–44 (VTVYDDCHIGH) is the 'HIGH' region element. Zn(2+)-binding residues include C213, H238, and E242. The 'KMSKS' region motif lies at 270–274 (KMSKS). An ATP-binding site is contributed by K273.

Belongs to the class-I aminoacyl-tRNA synthetase family. As to quaternary structure, monomer. The cofactor is Zn(2+).

It is found in the cytoplasm. It carries out the reaction tRNA(Cys) + L-cysteine + ATP = L-cysteinyl-tRNA(Cys) + AMP + diphosphate. The chain is Cysteine--tRNA ligase from Francisella tularensis subsp. tularensis (strain SCHU S4 / Schu 4).